The chain runs to 94 residues: Co-chaperonin GroES (94 aa).

It belongs to the GroES chaperonin family. In terms of assembly, heptamer of 7 subunits arranged in a ring. Interacts with the chaperonin GroEL.

The protein resides in the cytoplasm. Its function is as follows. Together with the chaperonin GroEL, plays an essential role in assisting protein folding. The GroEL-GroES system forms a nano-cage that allows encapsulation of the non-native substrate proteins and provides a physical environment optimized to promote and accelerate protein folding. GroES binds to the apical surface of the GroEL ring, thereby capping the opening of the GroEL channel. The sequence is that of Co-chaperonin GroES from Clostridium perfringens (strain ATCC 13124 / DSM 756 / JCM 1290 / NCIMB 6125 / NCTC 8237 / Type A).